Consider the following 461-residue polypeptide: MINAWAQIEHTLRDNLNPGLFKVWIKPLAAEQAGDSLRLVAPNAFVASWVRDRLMNEIEKAAASVLGSVPTITVVSGEEPAAAPRPVQVPAQKRPAAARTSGAEQMGLPLHYASRSADSIKWMHSFDEFVVGPSNQMAFAASQDICQQSFRSDTLFLSSDPGLGKTHLLHAVGQQLCNISNRTLPRVEYLTAEEFATRLICALKAKEVDRFKARYRDVDVLLLEDVHFLQGKQRMQDEVLSTVKALQSRGAKVLFSSSFAPKDLNDLDSQLTSRFCSGLLAVIEKPTFETRKQILREKARLHHVQLPEQVADLLADNIRADVRQIESCLRNLLLKARLLNQQITMDMAWEIIGHYAKREAVLDIDAIVRQICSGFDISKEQLQSRSRRRELVIARNTAFFLARKHTDLSLEEIGKRFNRKHSTVIKGIANIEREMNKETPLGRQVVNAVNMVERNGRIIHP.

Residues 1 to 68 (MINAWAQIEH…EKAAASVLGS (68 aa)) form a domain I, interacts with DnaA modulators region. The tract at residues 68 to 118 (SVPTITVVSGEEPAAAPRPVQVPAQKRPAAARTSGAEQMGLPLHYASRSAD) is domain II. The tract at residues 119-336 (SIKWMHSFDE…SCLRNLLLKA (218 aa)) is domain III, AAA+ region. 4 residues coordinate ATP: glycine 162, glycine 164, lysine 165, and threonine 166. Residues 337–461 (RLLNQQITMD…VERNGRIIHP (125 aa)) form a domain IV, binds dsDNA region.

This sequence belongs to the DnaA family. Oligomerizes as a right-handed, spiral filament on DNA at oriC.

Its subcellular location is the cytoplasm. In terms of biological role, plays an essential role in the initiation and regulation of chromosomal replication. ATP-DnaA binds to the origin of replication (oriC) to initiate formation of the DNA replication initiation complex once per cell cycle. Binds the DnaA box (a 9 base pair repeat at the origin) and separates the double-stranded (ds)DNA. Forms a right-handed helical filament on oriC DNA; dsDNA binds to the exterior of the filament while single-stranded (ss)DNA is stabiized in the filament's interior. The ATP-DnaA-oriC complex binds and stabilizes one strand of the AT-rich DNA unwinding element (DUE), permitting loading of DNA polymerase. After initiation quickly degrades to an ADP-DnaA complex that is not apt for DNA replication. Binds acidic phospholipids. In Oleidesulfovibrio alaskensis (strain ATCC BAA-1058 / DSM 17464 / G20) (Desulfovibrio alaskensis), this protein is Chromosomal replication initiator protein DnaA.